Consider the following 314-residue polypeptide: DNA-directed RNA polymerase subunit alpha (314 aa).

Positions 1-228 (MIEFEKPNIH…EHLGLFMDIS (228 aa)) are alpha N-terminal domain (alpha-NTD). Residues 242 to 314 (PVAASASDSA…DMNLGFRKED (73 aa)) are alpha C-terminal domain (alpha-CTD).

The protein belongs to the RNA polymerase alpha chain family. In terms of assembly, homodimer. The RNAP catalytic core consists of 2 alpha, 1 beta, 1 beta' and 1 omega subunit. When a sigma factor is associated with the core the holoenzyme is formed, which can initiate transcription.

The catalysed reaction is RNA(n) + a ribonucleoside 5'-triphosphate = RNA(n+1) + diphosphate. DNA-dependent RNA polymerase catalyzes the transcription of DNA into RNA using the four ribonucleoside triphosphates as substrates. The chain is DNA-directed RNA polymerase subunit alpha from Leuconostoc mesenteroides subsp. mesenteroides (strain ATCC 8293 / DSM 20343 / BCRC 11652 / CCM 1803 / JCM 6124 / NCDO 523 / NBRC 100496 / NCIMB 8023 / NCTC 12954 / NRRL B-1118 / 37Y).